Reading from the N-terminus, the 227-residue chain is Class I hydrophobin A (227 aa).

The first 18 residues, 1-18 (MQFSLSAIVLGLAATVYA), serve as a signal peptide directing secretion. Asn-50 is a glycosylation site (N-linked (GlcNAc...) asparagine). 3 cysteine pairs are disulfide-bonded: Cys-60–Cys-138, Cys-68–Cys-132, and Cys-69–Cys-109.

The protein belongs to the fungal hydrophobin family.

The protein resides in the secreted. The protein localises to the cell wall. In terms of biological role, aerial growth, conidiation, and dispersal of filamentous fungi in the environment rely upon a capability of their secreting small amphipathic proteins called hydrophobins (HPBs) with low sequence identity. Class I can self-assemble into an outermost layer of rodlet bundles on aerial cell surfaces, conferring cellular hydrophobicity that supports fungal growth, development and dispersal; whereas Class II form highly ordered films at water-air interfaces through intermolecular interactions but contribute nothing to the rodlet structure. In P.expansum, hydrophobins contribute to germination, tolerance to cold stress and mycotoxins patulin and citrinin production. HfbA and HfbB are essential for fungal surface hydrophobicity and HfbA mediates air and water dispersal. The polypeptide is Class I hydrophobin A (Penicillium expansum (Blue mold rot fungus)).